The sequence spans 424 residues: Serine hydroxymethyltransferase (424 aa).

Residues Leu113 and 117-119 (GHL) contribute to the (6S)-5,6,7,8-tetrahydrofolate site. Lys222 carries the N6-(pyridoxal phosphate)lysine modification. Position 361 to 363 (361 to 363 (SPF)) interacts with (6S)-5,6,7,8-tetrahydrofolate.

Belongs to the SHMT family. As to quaternary structure, homodimer. The cofactor is pyridoxal 5'-phosphate.

It localises to the cytoplasm. It catalyses the reaction (6R)-5,10-methylene-5,6,7,8-tetrahydrofolate + glycine + H2O = (6S)-5,6,7,8-tetrahydrofolate + L-serine. The protein operates within one-carbon metabolism; tetrahydrofolate interconversion. It participates in amino-acid biosynthesis; glycine biosynthesis; glycine from L-serine: step 1/1. Its function is as follows. Catalyzes the reversible interconversion of serine and glycine with tetrahydrofolate (THF) serving as the one-carbon carrier. This reaction serves as the major source of one-carbon groups required for the biosynthesis of purines, thymidylate, methionine, and other important biomolecules. Also exhibits THF-independent aldolase activity toward beta-hydroxyamino acids, producing glycine and aldehydes, via a retro-aldol mechanism. This Flavobacterium johnsoniae (strain ATCC 17061 / DSM 2064 / JCM 8514 / BCRC 14874 / CCUG 350202 / NBRC 14942 / NCIMB 11054 / UW101) (Cytophaga johnsonae) protein is Serine hydroxymethyltransferase.